The following is a 668-amino-acid chain: Hemocyanin subunit D (668 aa).

An N-terminal signal peptide occupies residues methionine 1 to serine 22. Cu cation-binding residues include histidine 206, histidine 210, and histidine 236. Asparagine 322 is a glycosylation site (N-linked (GlcNAc...) asparagine). Residues histidine 357, histidine 361, and histidine 397 each coordinate Cu cation. The cysteines at positions 567 and 614 are disulfide-linked.

This sequence belongs to the tyrosinase family. Hemocyanin subfamily. 36-chain polymer consisting of 6 hexamers, each of which includes 4 different chains, A, B, C and D. Hemolymph.

It is found in the secreted. Its subcellular location is the extracellular space. Functionally, hemocyanins are copper-containing oxygen carriers occurring freely dissolved in the hemolymph of many mollusks and arthropods. In Scutigera coleoptrata (House centipede), this protein is Hemocyanin subunit D (HCD).